The chain runs to 164 residues: Urocortin-3 (164 aa).

The first 23 residues, Met-1–Ser-23, serve as a signal peptide directing secretion. Positions His-24–Thr-121 are excised as a propeptide. A disordered region spans residues Ser-58–Gly-120. The span at Leu-110–Gly-120 shows a compositional bias: basic and acidic residues. Ile-160 is subject to Isoleucine amide.

The protein belongs to the sauvagine/corticotropin-releasing factor/urotensin I family. As to quaternary structure, binds with high affinity to CRF receptors 2-alpha and 2-beta. In terms of tissue distribution, expressed in some areas of the brain including the hypothalamus, amygdala, and brainstem, but is not evident in the cerebellum, pituitary, or cerebral cortex; it is also expressed peripherally in small intestine and skin.

Its subcellular location is the secreted. In terms of biological role, suppresses food intake, delays gastric emptying and decreases heat-induced edema. Might represent an endogenous ligand for maintaining homeostasis after stress. This is Urocortin-3 (Ucn3) from Mus musculus (Mouse).